The sequence spans 273 residues: Dermonecrotic toxin LamSicTox-alphaIC1 (273 aa).

H5 is a catalytic residue. Mg(2+) is bound by residues E25 and D27. H41 (nucleophile) is an active-site residue. 2 disulfide bridges follow: C45–C51 and C47–C190. Residue D85 participates in Mg(2+) binding.

It belongs to the arthropod phospholipase D family. Class II subfamily. It depends on Mg(2+) as a cofactor. Expressed by the venom gland.

The protein resides in the secreted. The enzyme catalyses an N-(acyl)-sphingosylphosphocholine = an N-(acyl)-sphingosyl-1,3-cyclic phosphate + choline. It carries out the reaction an N-(acyl)-sphingosylphosphoethanolamine = an N-(acyl)-sphingosyl-1,3-cyclic phosphate + ethanolamine. The catalysed reaction is a 1-acyl-sn-glycero-3-phosphocholine = a 1-acyl-sn-glycero-2,3-cyclic phosphate + choline. It catalyses the reaction a 1-acyl-sn-glycero-3-phosphoethanolamine = a 1-acyl-sn-glycero-2,3-cyclic phosphate + ethanolamine. Dermonecrotic toxins cleave the phosphodiester linkage between the phosphate and headgroup of certain phospholipids (sphingolipid and lysolipid substrates), forming an alcohol (often choline) and a cyclic phosphate. This toxin acts on sphingomyelin (SM). It may also act on ceramide phosphoethanolamine (CPE), lysophosphatidylcholine (LPC) and lysophosphatidylethanolamine (LPE), but not on lysophosphatidylserine (LPS), and lysophosphatidylglycerol (LPG). It acts by transphosphatidylation, releasing exclusively cyclic phosphate products as second products. Induces dermonecrosis, hemolysis, increased vascular permeability, edema, inflammatory response, and platelet aggregation. This chain is Dermonecrotic toxin LamSicTox-alphaIC1, found in Loxosceles amazonica (Recluse spider).